The chain runs to 723 residues: Catalase-peroxidase (723 aa).

Residues 97-225 constitute a cross-link (tryptophyl-tyrosyl-methioninium (Trp-Tyr) (with M-251)); it reads WHAAGSYRVT…LAAVQMGLIY (129 aa). The Proton acceptor role is filled by histidine 98. The tryptophyl-tyrosyl-methioninium (Tyr-Met) (with W-97) cross-link spans 225 to 251; the sequence is YVNPEGVNGKSDPLATAAQMRETFARM. Histidine 266 is a binding site for heme b.

This sequence belongs to the peroxidase family. Peroxidase/catalase subfamily. In terms of assembly, homodimer or homotetramer. Heme b serves as cofactor. Formation of the three residue Trp-Tyr-Met cross-link is important for the catalase, but not the peroxidase activity of the enzyme.

It catalyses the reaction H2O2 + AH2 = A + 2 H2O. The enzyme catalyses 2 H2O2 = O2 + 2 H2O. In terms of biological role, bifunctional enzyme with both catalase and broad-spectrum peroxidase activity. This chain is Catalase-peroxidase, found in Agrobacterium fabrum (strain C58 / ATCC 33970) (Agrobacterium tumefaciens (strain C58)).